Here is a 195-residue protein sequence, read N- to C-terminus: Thymidine kinase (195 aa).

ATP-binding positions include 15–22 and 88–91; these read GSMFSGKS and DEVQ. The Proton acceptor role is filled by Glu89. Zn(2+) is bound by residues Cys145, Cys148, Cys183, and Cys186.

It belongs to the thymidine kinase family. Homotetramer.

It is found in the cytoplasm. The enzyme catalyses thymidine + ATP = dTMP + ADP + H(+). This is Thymidine kinase from Bacillus cereus (strain AH187).